Consider the following 229-residue polypeptide: Putative ABC transporter permease protein ORF1 (229 aa).

Residues alanine 23–valine 214 enclose the ABC transmembrane type-1 domain. A run of 5 helical transmembrane segments spans residues leucine 27–valine 47, tryptophan 62–leucine 82, leucine 91–alanine 111, alanine 150–leucine 170, and serine 194–valine 214.

It belongs to the binding-protein-dependent transport system permease family. MalFG subfamily.

It localises to the cell membrane. Functionally, may participate in oleandomycin secretion during antibiotic production. This is Putative ABC transporter permease protein ORF1 from Streptomyces antibioticus.